The primary structure comprises 276 residues: Diaminopimelate epimerase (276 aa).

N13, Q46, and N66 together coordinate substrate. C75 functions as the Proton donor in the catalytic mechanism. Residues 76–77, N159, N192, and 210–211 contribute to the substrate site; these read GN and ER. Catalysis depends on C219, which acts as the Proton acceptor. 220–221 provides a ligand contact to substrate; sequence GT.

Belongs to the diaminopimelate epimerase family. As to quaternary structure, homodimer.

The protein resides in the cytoplasm. It catalyses the reaction (2S,6S)-2,6-diaminopimelate = meso-2,6-diaminopimelate. It functions in the pathway amino-acid biosynthesis; L-lysine biosynthesis via DAP pathway; DL-2,6-diaminopimelate from LL-2,6-diaminopimelate: step 1/1. In terms of biological role, catalyzes the stereoinversion of LL-2,6-diaminopimelate (L,L-DAP) to meso-diaminopimelate (meso-DAP), a precursor of L-lysine and an essential component of the bacterial peptidoglycan. The sequence is that of Diaminopimelate epimerase from Pseudomonas entomophila (strain L48).